Here is a 387-residue protein sequence, read N- to C-terminus: Paralemmin-1 (387 aa).

N-acetylmethionine is present on Met-1. Positions 9–101 (TSQQERLQAI…EKEIEVLERG (93 aa)) form a coiled coil. 2 stretches are compositionally biased toward basic and acidic residues: residues 31 to 41 (KRRQLEDERRQ) and 69 to 102 (DLRR…ERGD). Residues 31 to 160 (KRRQLEDERR…VSNTPLRTVD (130 aa)) form a disordered region. Low complexity predominate over residues 104–117 (APATAKENAAAPSP). Ser-116 and Ser-124 each carry phosphoserine. Phosphothreonine is present on residues Thr-141 and Thr-145. The residue at position 162 (Ser-162) is a Phosphoserine. Residue Thr-243 is modified to Phosphothreonine. Residue Ser-245 is modified to Phosphoserine. 2 disordered regions span residues 247-296 (AGST…GQEP) and 335-378 (AEPK…DMKK). Residues 286–296 (GPPGIQPGQEP) are compositionally biased toward low complexity. Ser-346 bears the Phosphoserine mark. Thr-367 carries the post-translational modification Phosphothreonine. Ser-369 carries the post-translational modification Phosphoserine. S-palmitoyl cysteine attachment occurs at residues Cys-381 and Cys-383. Cys-384 carries the cysteine methyl ester modification. Cys-384 carries the S-farnesyl cysteine lipid modification. The propeptide at 385–387 (SIM) is removed in mature form.

Belongs to the paralemmin family. Interacts with dopamine receptor DRD3. Widely expressed with highest expression in brain and testis and intermediate expression in heart and adrenal gland.

The protein resides in the cell membrane. Its subcellular location is the cell projection. It is found in the filopodium membrane. It localises to the axon. The protein localises to the dendrite. The protein resides in the dendritic spine. Its subcellular location is the basolateral cell membrane. It is found in the apicolateral cell membrane. Functionally, involved in plasma membrane dynamics and cell process formation. Isoform 1 and isoform 2 are necessary for axonal and dendritic filopodia induction, for dendritic spine maturation and synapse formation in a palmitoylation-dependent manner. The polypeptide is Paralemmin-1 (PALM) (Homo sapiens (Human)).